Reading from the N-terminus, the 1088-residue chain is PAN2-PAN3 deadenylation complex catalytic subunit pan2 (1088 aa).

WD repeat units lie at residues 16–56, 136–175, 178–224, and 270–309; these read VSTC…YTQF, HKDK…PVNK, AHTG…SLVP, and PLTS…SFSD. The segment at 309–443 is linker; sequence DLKLPIQLPN…EDTISGPDSI (135 aa). Positions 443 to 814 constitute a USP domain; it reads IPKFYQRPVI…IPIIVYYEKL (372 aa). In terms of domain architecture, Exonuclease spans 860 to 1033; the sequence is VGIDSEFVAL…EDALTALKLY (174 aa). Positions 863, 865, 972, and 1025 each coordinate a divalent metal cation.

This sequence belongs to the peptidase C19 family. PAN2 subfamily. In terms of assembly, forms a heterotrimer with an asymmetric homodimer of the regulatory subunit ppk26/pan3 to form the poly(A)-nuclease (PAN) deadenylation complex. It depends on a divalent metal cation as a cofactor.

It is found in the cytoplasm. It catalyses the reaction Exonucleolytic cleavage of poly(A) to 5'-AMP.. With respect to regulation, positively regulated by the regulatory subunit ppk26/pan3. Functionally, catalytic subunit of the poly(A)-nuclease (PAN) deadenylation complex, one of two cytoplasmic mRNA deadenylases involved in mRNA turnover. PAN specifically shortens poly(A) tails of RNA and the activity is stimulated by poly(A)-binding protein pab1. PAN deadenylation is followed by rapid degradation of the shortened mRNA tails by the CCR4-NOT complex. Deadenylated mRNAs are then degraded by two alternative mechanisms, namely exosome-mediated 3'-5' exonucleolytic degradation, or deadenylation-dependent mRNA decaping and subsequent 5'-3' exonucleolytic degradation by xrn1. May also be involved in post-transcriptional maturation of mRNA poly(A) tails. This is PAN2-PAN3 deadenylation complex catalytic subunit pan2 from Schizosaccharomyces pombe (strain 972 / ATCC 24843) (Fission yeast).